A 677-amino-acid polypeptide reads, in one-letter code: Protein hook (677 aa).

The region spanning 6 to 123 is the Calponin-homology (CH) domain; it reads NEMYYSLLEW…RLLQLVLGCA (118 aa). Coiled-coil stretches lie at residues 135 to 436 and 478 to 588; these read EIMC…KCGH and QTAL…AKEV.

This sequence belongs to the hook family. Homodimer. Interacts with microtubules via its N-terminus.

The protein localises to the cytoplasm. Its subcellular location is the cytoskeleton. It localises to the endosome. The protein resides in the synapse. Its function is as follows. Involved in endocytic trafficking by stabilizing organelles of the endocytic pathway. Probably acts as a cytoskeletal linker protein required to tether endosome vesicles to the cytoskeleton. Involved in modulation of endocytosis at stages required for down-regulation of membrane proteins that control synapse size. Not involved in synaptic vesicle recycling. Required in R7 cells for boss endocytosis into multivesicular bodies (MVBs). Has a role in regulating adult longevity. The chain is Protein hook from Drosophila pseudoobscura pseudoobscura (Fruit fly).